Consider the following 211-residue polypeptide: Probable nicotinate-nucleotide adenylyltransferase (211 aa).

It belongs to the NadD family.

The enzyme catalyses nicotinate beta-D-ribonucleotide + ATP + H(+) = deamido-NAD(+) + diphosphate. The protein operates within cofactor biosynthesis; NAD(+) biosynthesis; deamido-NAD(+) from nicotinate D-ribonucleotide: step 1/1. Catalyzes the reversible adenylation of nicotinate mononucleotide (NaMN) to nicotinic acid adenine dinucleotide (NaAD). This is Probable nicotinate-nucleotide adenylyltransferase from Legionella pneumophila (strain Corby).